We begin with the raw amino-acid sequence, 271 residues long: Phosphonoacetaldehyde hydrolase (271 aa).

Asp-12 acts as the Nucleophile in catalysis. Residues Asp-12 and Ala-14 each coordinate Mg(2+). The Schiff-base intermediate with substrate role is filled by Lys-54. Asp-188 provides a ligand contact to Mg(2+).

Belongs to the HAD-like hydrolase superfamily. PhnX family. In terms of assembly, homodimer. It depends on Mg(2+) as a cofactor.

The catalysed reaction is phosphonoacetaldehyde + H2O = acetaldehyde + phosphate + H(+). In terms of biological role, involved in phosphonate degradation. The polypeptide is Phosphonoacetaldehyde hydrolase (Vibrio parahaemolyticus serotype O3:K6 (strain RIMD 2210633)).